A 60-amino-acid polypeptide reads, in one-letter code: Mastoparan-VT5 (60 aa).

An N-terminal signal peptide occupies residues 1 to 27 (MKNTILILFTAFIALLGFFGMIAEPLA). 4 AXPX repeats span residues 27 to 30 (ADPL), 31 to 34 (ADPL), 37 to 40 (ADPD), and 41 to 44 (ADPE). Positions 28–45 (DPLADPLPDADPDADPET) are excised as a propeptide.

Belongs to the MCD family. Mastoparan subfamily. Expressed by the venom gland.

It localises to the secreted. The synthetic peptide shows weak antimicrobial activities against a few Gram-positive bacteria (only 2 on the 11 strains tested) and the fungus C.albicans. Does not show activity against all the Gram-negative bacteria tested. Exhibits little hemolytic activity against washed human erythrocytes. The sequence is that of Mastoparan-VT5 from Vespa tropica (Greater banded hornet).